Reading from the N-terminus, the 140-residue chain is Putative pre-16S rRNA nuclease (140 aa).

The protein belongs to the YqgF nuclease family.

It localises to the cytoplasm. Functionally, could be a nuclease involved in processing of the 5'-end of pre-16S rRNA. The sequence is that of Putative pre-16S rRNA nuclease from Serratia proteamaculans (strain 568).